A 76-amino-acid polypeptide reads, in one-letter code: Large ribosomal subunit protein bL31 (76 aa).

Residues cysteine 16, cysteine 18, cysteine 38, and cysteine 41 each coordinate Zn(2+).

This sequence belongs to the bacterial ribosomal protein bL31 family. Type A subfamily. As to quaternary structure, part of the 50S ribosomal subunit. Requires Zn(2+) as cofactor.

Binds the 23S rRNA. The sequence is that of Large ribosomal subunit protein bL31 from Nocardia farcinica (strain IFM 10152).